A 502-amino-acid chain; its full sequence is MYSIAFMLVLRKMDEIISHTLAFQALVSLILLISITKWLSNSPKNKNSSPPSPRKLPILGNLLQLGSLPHHNLRSMARKHGPIMLLHLGSVRPVSSRRRPRGNHENSRSRLRRPRGSRSAALQLQGRVGGYGEYWRQLKTICVVQLLSNKRVQSFRSVREEETELLMKKIGDSSGNVNLSHMFTQLTNDVVCRSAIGRKYGAGDENGEKFLEILREFLELLGAISIGDFVPSLWWINRINGFDRRVDRIAKEMDEFLEKVIHERLENPAAKAEENFVDILLEIYRNNSAGVSIDRDSIKAIILDVFAAGTDTTAVVLEWAMTELLRHPEIMKKLQSEVRQVVKDKHNITDDDIEKMHYLKAVMKETMRFHTPIPLLVPRVARNDVEVMGYDVPVGTMVMINAWAIGRDPTSWDEPEKFRPERFLNSSVDFKGLDFELIPFGAGRRGCPGTTFPMATLEFTLANLMQKFDWELPHECRELDMSERPGVAIRRVIPLLAIGTKM.

A helical membrane pass occupies residues 16-36 (IISHTLAFQALVSLILLISIT). The interval 93–119 (PVSSRRRPRGNHENSRSRLRRPRGSRS) is disordered. Cysteine 447 is a binding site for heme.

It belongs to the cytochrome P450 family. Requires heme as cofactor.

Its subcellular location is the membrane. This is Cytochrome P450 71A8 (CYP71A8) from Mentha piperita (Peppermint).